Reading from the N-terminus, the 216-residue chain is Homologous-pairing protein 2 (216 aa).

Belongs to the HOP2 family. As to quaternary structure, interacts with mcp7.

Its subcellular location is the nucleus. Its function is as follows. Required for proper homologous pairing and efficient cross-over and intragenic recombination during meiosis. Acts indirectly in a process facilitating homologous recombination. Acts during mid- to late-horse-tail period. In Schizosaccharomyces pombe (strain 972 / ATCC 24843) (Fission yeast), this protein is Homologous-pairing protein 2 (meu13).